A 267-amino-acid chain; its full sequence is Phosphatidylserine decarboxylase proenzyme (267 aa).

Residues D78, H132, and S236 each act as charge relay system; for autoendoproteolytic cleavage activity in the active site. The active-site Schiff-base intermediate with substrate; via pyruvic acid; for decarboxylase activity is the S236. S236 carries the pyruvic acid (Ser); by autocatalysis modification.

Belongs to the phosphatidylserine decarboxylase family. PSD-B subfamily. Prokaryotic type I sub-subfamily. Heterodimer of a large membrane-associated beta subunit and a small pyruvoyl-containing alpha subunit. It depends on pyruvate as a cofactor. Is synthesized initially as an inactive proenzyme. Formation of the active enzyme involves a self-maturation process in which the active site pyruvoyl group is generated from an internal serine residue via an autocatalytic post-translational modification. Two non-identical subunits are generated from the proenzyme in this reaction, and the pyruvate is formed at the N-terminus of the alpha chain, which is derived from the carboxyl end of the proenzyme. The autoendoproteolytic cleavage occurs by a canonical serine protease mechanism, in which the side chain hydroxyl group of the serine supplies its oxygen atom to form the C-terminus of the beta chain, while the remainder of the serine residue undergoes an oxidative deamination to produce ammonia and the pyruvoyl prosthetic group on the alpha chain. During this reaction, the Ser that is part of the protease active site of the proenzyme becomes the pyruvoyl prosthetic group, which constitutes an essential element of the active site of the mature decarboxylase.

It is found in the cell membrane. It carries out the reaction a 1,2-diacyl-sn-glycero-3-phospho-L-serine + H(+) = a 1,2-diacyl-sn-glycero-3-phosphoethanolamine + CO2. It participates in phospholipid metabolism; phosphatidylethanolamine biosynthesis; phosphatidylethanolamine from CDP-diacylglycerol: step 2/2. Its function is as follows. Catalyzes the formation of phosphatidylethanolamine (PtdEtn) from phosphatidylserine (PtdSer). The sequence is that of Phosphatidylserine decarboxylase proenzyme from Helicobacter pylori (strain J99 / ATCC 700824) (Campylobacter pylori J99).